Here is a 152-residue protein sequence, read N- to C-terminus: Toxin Res (152 aa).

It belongs to the MbcT/ParT/Res family. In terms of assembly, homodimer. Forms a complex with cognate antitoxin Xre.

Functionally, toxic component of a type II toxin-antitoxin (TA) system. Expression in E.coli inhibits cell growth; bacteriostasis is neutralized by expression of cognate antitoxin Xre. Probably depletes intracellular NAD(+). This Yersinia enterocolitica serotype O:8 / biotype 1B (strain NCTC 13174 / 8081) protein is Toxin Res.